A 204-amino-acid polypeptide reads, in one-letter code: MSMAPEHDFFFKILLIGDSGVGKSCLLLRFADDSWTDTHISTIGVDFKIKTLNLDGKTIKLQIWDTAGQERFRTITSSYYRGAQGIILVYDCTDQDSFTNVKQWMGEIDRYACENVNKLLVGNKTDLVNEKVVDSNQAKSFAESYGIPFIETSAKNATNVEECFISMARDIKNRLADIQETPKPDEVDIKSKNKTKSGGKKSFC.

Residues 17-25 (GDSGVGKSC), 35-42 (WTDTHIST), 65-69 (DTAGQ), 123-126 (NKTD), and 153-155 (SAK) contribute to the GTP site. The short motif at 39-47 (HISTIGVDF) is the Effector region element. The segment covering 182-191 (PKPDEVDIKS) has biased composition (basic and acidic residues). Residues 182–204 (PKPDEVDIKSKNKTKSGGKKSFC) are disordered. Basic residues predominate over residues 192–204 (KNKTKSGGKKSFC). The S-geranylgeranyl cysteine moiety is linked to residue cysteine 204.

This sequence belongs to the small GTPase superfamily. Rab family.

The protein localises to the cell membrane. The protein is Ras-related protein Rab-1D (rab1D) of Dictyostelium discoideum (Social amoeba).